The following is a 269-amino-acid chain: Cytochrome c oxidase subunit 3 (269 aa).

The next 7 helical transmembrane spans lie at 21 to 41 (PWPMFTSFSLMNLALSLGLTA), 49 to 69 (MFMLLSTMTVLYSMTLWFKDI), 90 to 110 (GFLMFVVSEMLMFSSLFWAFL), 132 to 152 (ISAAELPLLNTMILLASGVTM), 167 to 187 (TLYGFAYSTLLMVLFVMFQGL), 205 to 225 (FFALTGLHGLHMMMLIMMLAM), and 247 to 267 (ILYLHVLDVMWLFMYMIVYWW).

Belongs to the cytochrome c oxidase subunit 3 family. In terms of assembly, component of the cytochrome c oxidase (complex IV, CIV), a multisubunit enzyme composed of a catalytic core of 3 subunits and several supernumerary subunits. The complex exists as a monomer or a dimer and forms supercomplexes (SCs) in the inner mitochondrial membrane with ubiquinol-cytochrome c oxidoreductase (cytochrome b-c1 complex, complex III, CIII).

The protein localises to the mitochondrion inner membrane. It catalyses the reaction 4 Fe(II)-[cytochrome c] + O2 + 8 H(+)(in) = 4 Fe(III)-[cytochrome c] + 2 H2O + 4 H(+)(out). In terms of biological role, component of the cytochrome c oxidase, the last enzyme in the mitochondrial electron transport chain which drives oxidative phosphorylation. The respiratory chain contains 3 multisubunit complexes succinate dehydrogenase (complex II, CII), ubiquinol-cytochrome c oxidoreductase (cytochrome b-c1 complex, complex III, CIII) and cytochrome c oxidase (complex IV, CIV), that cooperate to transfer electrons derived from NADH and succinate to molecular oxygen, creating an electrochemical gradient over the inner membrane that drives transmembrane transport and the ATP synthase. Cytochrome c oxidase is the component of the respiratory chain that catalyzes the reduction of oxygen to water. Electrons originating from reduced cytochrome c in the intermembrane space (IMS) are transferred via the dinuclear copper A center (CU(A)) of subunit 2 and heme A of subunit 1 to the active site in subunit 1, a binuclear center (BNC) formed by heme A3 and copper B (CU(B)). The BNC reduces molecular oxygen to 2 water molecules using 4 electrons from cytochrome c in the IMS and 4 protons from the mitochondrial matrix. The protein is Cytochrome c oxidase subunit 3 (COX3) of Debaryomyces hansenii (strain ATCC 36239 / CBS 767 / BCRC 21394 / JCM 1990 / NBRC 0083 / IGC 2968) (Yeast).